The primary structure comprises 815 residues: Cell division control protein 48 homolog D (815 aa).

Ala2 carries the post-translational modification N-acetylalanine. Residue Ser42 is modified to Phosphoserine. ATP contacts are provided by residues 249 to 256 (GPPGSGKT) and 522 to 529 (GPPGCGKT). Ser720 is subject to Phosphoserine. Residues 772–815 (GSEFRFPDAPTGTTGAFPGAAATVGGVDPFATSGGAADDDDLYS) are disordered. The span at 780–798 (APTGTTGAFPGAAATVGGV) shows a compositional bias: low complexity.

The protein belongs to the AAA ATPase family.

The protein resides in the nucleus. It is found in the cytoplasm. It localises to the cytoskeleton. Its subcellular location is the phragmoplast. In terms of biological role, probably functions in cell division and growth processes. Interacts with certain SNAREs as part of specialized membrane fusion events where vesicles from the same organelle fuse (homotypic fusion). This Arabidopsis thaliana (Mouse-ear cress) protein is Cell division control protein 48 homolog D (CDC48D).